The primary structure comprises 1038 residues: TonB-dependent receptor P39 (1038 aa).

Residues 1 to 39 (MFKQKLKMKPKIKRNCTFSGLAFILMLLFSSFTVNNLNA) form the signal peptide. The TonB box signature appears at 120–127 (DEVVVIGY). The TBDR plug domain maps to 131 to 243 (KRADVIGAVG…ANGVVLITTK (113 aa)). A TBDR beta-barrel domain is found at 249 to 1038 (FPKMTVDYIS…EIVIGLNVEF (790 aa)). Positions 1021–1038 (SLRYPNQTEIVIGLNVEF) match the TonB C-terminal box motif.

This sequence belongs to the TonB-dependent receptor family.

It is found in the cell outer membrane. Functionally, tonB-dependent receptor probably involved in ulvan degradation. Ulvan is the main polysaccharide component of the Ulvales (green seaweed) cell wall. It is composed of disaccharide building blocks comprising 3-sulfated rhamnose (Rha3S) linked to D-glucuronic acid (GlcA), L-iduronic acid (IduA), or D-xylose (Xyl). The TonB-dependent receptor may mediate transport of ulvan oligosaccharides from the surface of the outer membrane to the periplasm for subsequent degradation. The chain is TonB-dependent receptor P39 from Formosa agariphila (strain DSM 15362 / KCTC 12365 / LMG 23005 / KMM 3901 / M-2Alg 35-1).